A 385-amino-acid polypeptide reads, in one-letter code: Trans-enoyl reductase poxH (385 aa).

64–67 (QPYS) is a binding site for NADP(+). 156–163 (PDPAAPPI) lines the substrate pocket. NADP(+)-binding positions include 199–202 (STSV), 223–226 (SGTD), Y241, and 289–290 (LG). A substrate-binding site is contributed by 309-313 (HMAPL). 372-373 (KR) serves as a coordination point for NADP(+).

It belongs to the zinc-containing alcohol dehydrogenase family. As to quaternary structure, monomer.

It functions in the pathway secondary metabolite biosynthesis. In terms of biological role, trans-enoyl reductase; part of the gene cluster that mediates the biosynthesis of oxaleimides, cytotoxic compounds containing an unusual disubstituted succinimide moiety. The first step of the pathway is provided by the HR-PKS poxF that serves in a new mode of collaborative biosynthesis with the PKS-NRPS poxE, by providing the olefin containing amino acid substrate via the synthesis of an ACP-bound dec-4-enoate. The cytochrome P450 monooxygenase poxM-catalyzed oxidation at the alpha-position creates the enzyme-bound 2-hydroxydec-4-enoyl-ACP thioester, which may be prone to spontaneous hydrolysis to yield 2-hydroxydec-4-enoic acid due to increased electrophilicity of the carbonyl. 2-hydroxydec-4-enoic acid can then be further oxidized by poxM to yield the alpha-ketoacid 2-oxodec-4-enoicacid, which is reductively aminated by the aminotransferase poxL to yield (S,E)-2-aminodec-4-enoic acid. The Hybrid PKS-NRPS synthetase poxE then performs condensation between the octaketide product of its PKS modules and the amino group of (S,E)-2-aminodec-4-enoic acid which is activated and incorporated by the adenylation domain. The resulting aminoacyl product can be cyclized by the Diels-Alderase PoxQ and reductively released by the reductive (R) domain of poxE to yield an aldehyde intermediate. The released aldehyde is then substrate for a Knoevenagel condensation by the hydrolyase poxO followed by an oxidation at the 5-position of the pyrrolidone ring. The presence of the olefin from the amino acid building block allows for migration of the substituted allyl group to occur. This allylic transposition reaction takes place in a conjugate addition, semipinacol-like fashion to yield a succinimide intermediate. Iterative two-electron oxidations of the C7 methyl of the succinimide intermediate to the carboxylic acid can be catalyzed by one of two remaining cytochrome P450 monooxygenasess poxC or poxD to yield oxaleimide A. Subsequent oxidation yields the maleimide scaffold oxaleimide I. Both oxaleimide A and oxaleimide I can undergo oxidative modifications in the decalin ring to yield the series of products oxaleimides B to H. The sequence is that of Trans-enoyl reductase poxH from Penicillium oxalicum.